The chain runs to 208 residues: Large ribosomal subunit protein bL25 (208 aa).

This sequence belongs to the bacterial ribosomal protein bL25 family. CTC subfamily. As to quaternary structure, part of the 50S ribosomal subunit; part of the 5S rRNA/L5/L18/L25 subcomplex. Contacts the 5S rRNA. Binds to the 5S rRNA independently of L5 and L18.

Functionally, this is one of the proteins that binds to the 5S RNA in the ribosome where it forms part of the central protuberance. The polypeptide is Large ribosomal subunit protein bL25 (Bordetella pertussis (strain Tohama I / ATCC BAA-589 / NCTC 13251)).